Here is a 422-residue protein sequence, read N- to C-terminus: WD repeat and SOCS box-containing protein 1 (422 aa).

WD repeat units follow at residues 124–165 (SRCV…LLLN), 168–208 (DHTE…NMMK), 212–251 (GHQN…MIRK), 254–293 (GHYN…ILFE), and 309–346 (DNGR…SYPV). An SOCS box domain is found at 374–422 (NAYFWSTPKYVSSLQHLCRMAIRRVMNTNEVKKLPIPQKIMEFLTYQTM).

As to quaternary structure, component of a probable ECS E3 ubiquitin-protein ligase complex that contains the Elongin BC complex.

It participates in protein modification; protein ubiquitination. Probable substrate-recognition component of a SCF-like ECS (Elongin-Cullin-SOCS-box protein) E3 ubiquitin-protein ligase complex which mediates the ubiquitination and subsequent proteasomal degradation of target proteins. The chain is WD repeat and SOCS box-containing protein 1 (wsb1) from Xenopus tropicalis (Western clawed frog).